Reading from the N-terminus, the 237-residue chain is Eukaryotic translation initiation factor 3 subunit J (237 aa).

Residues 20 to 64 are disordered; sequence ANNINKWEGEDDDEDVKESWEDEEEKKDEEKPTKTEAPAKTKPNK. Residues 28-46 show a composition bias toward acidic residues; sequence GEDDDEDVKESWEDEEEKK. Basic and acidic residues predominate over residues 47–58; sequence DEEKPTKTEAPA. The stretch at 63-115 forms a coiled coil; it reads NKVLKAKLLEQECLEKEEEAKRLANMSTEEKLAEKLRLQKIQEESDLKSALET.

The protein belongs to the eIF-3 subunit J family. In terms of assembly, component of the eukaryotic translation initiation factor 3 (eIF-3) complex. The eIF-3 complex interacts with pix.

The protein localises to the cytoplasm. Functionally, component of the eukaryotic translation initiation factor 3 (eIF-3) complex, which is involved in protein synthesis of a specialized repertoire of mRNAs and, together with other initiation factors, stimulates binding of mRNA and methionyl-tRNAi to the 40S ribosome. The eIF-3 complex specifically targets and initiates translation of a subset of mRNAs involved in cell proliferation. The chain is Eukaryotic translation initiation factor 3 subunit J from Drosophila grimshawi (Hawaiian fruit fly).